Consider the following 329-residue polypeptide: Lipoyl synthase (329 aa).

Residues Cys55, Cys60, Cys66, Cys81, Cys85, Cys88, and Ser292 each coordinate [4Fe-4S] cluster. Residues Trp67 to Leu281 enclose the Radical SAM core domain.

The protein belongs to the radical SAM superfamily. Lipoyl synthase family. The cofactor is [4Fe-4S] cluster.

The protein localises to the cytoplasm. The catalysed reaction is [[Fe-S] cluster scaffold protein carrying a second [4Fe-4S](2+) cluster] + N(6)-octanoyl-L-lysyl-[protein] + 2 oxidized [2Fe-2S]-[ferredoxin] + 2 S-adenosyl-L-methionine + 4 H(+) = [[Fe-S] cluster scaffold protein] + N(6)-[(R)-dihydrolipoyl]-L-lysyl-[protein] + 4 Fe(3+) + 2 hydrogen sulfide + 2 5'-deoxyadenosine + 2 L-methionine + 2 reduced [2Fe-2S]-[ferredoxin]. Its pathway is protein modification; protein lipoylation via endogenous pathway; protein N(6)-(lipoyl)lysine from octanoyl-[acyl-carrier-protein]: step 2/2. In terms of biological role, catalyzes the radical-mediated insertion of two sulfur atoms into the C-6 and C-8 positions of the octanoyl moiety bound to the lipoyl domains of lipoate-dependent enzymes, thereby converting the octanoylated domains into lipoylated derivatives. The sequence is that of Lipoyl synthase from Clavibacter sepedonicus (Clavibacter michiganensis subsp. sepedonicus).